The following is a 139-amino-acid chain: Protein archease (139 aa).

Residues D12, D138, and I139 each coordinate Ca(2+).

It belongs to the archease family.

Functionally, activates the tRNA-splicing ligase complex by facilitating the enzymatic turnover of catalytic subunit RtcB. Acts by promoting the guanylylation of RtcB, a key intermediate step in tRNA ligation. Can also alter the NTP specificity of RtcB such that ATP, dGTP or ITP is used efficiently. The polypeptide is Protein archease (Saccharolobus islandicus (strain M.16.27) (Sulfolobus islandicus)).